Consider the following 254-residue polypeptide: N-acetylglucosamine-induced protein 1 (254 aa).

It is found in the cytoplasm. Its function is as follows. N-acetylglucosamine-induced protein which plays a role in the N-acetylglucosamine metabolic pathway. The polypeptide is N-acetylglucosamine-induced protein 1 (Candida albicans (strain SC5314 / ATCC MYA-2876) (Yeast)).